The primary structure comprises 483 residues: Coagulation factor X isoform 1 (483 aa).

The signal sequence occupies residues 1-20 (MAPQLLLCLILTFLWSLPEA). The propeptide occupies 21 to 40 (ESNVFLKSKVANRFLQRTKR). In terms of domain architecture, Gla spans 41-86 (ANSLFEEFKSGNIERECIEERCSKEEAREAFEDDEKTETFWNVYVD). A 4-carboxyglutamate mark is found at E46, E47, E54, E56, E59, E60, E65, E66, E69, E72, and E75. C57 and C62 are disulfide-bonded. The EGF-like 1; calcium-binding domain maps to 86–122 (DGDQCSSNPCHYGGTCKDGIGSYTCTCLSGYEGKNCE). 11 cysteine pairs are disulfide-bonded: C90/C101, C95/C110, C112/C121, C129/C140, C136/C149, C151/C164, C172/C345, C245/C250, C265/C281, C393/C407, and C418/C446. S92 carries an O-linked (Hex...) serine glycan. (3R)-3-hydroxyaspartate is present on D103. The region spanning 125 to 165 (LYKSCRVDNGDCWHFCKPVQNGIQCSCAESYLLGEDGHSCV) is the EGF-like 2 domain. A propeptide spans 183-238 (EANLPDFQTDFSDDYDEIDENNFVETPTNFSGLVLTVQSQNATLLKKSDNPSPDIR) (activation peptide). Residues 239–470 (VVNGTDCKLG…FILWIKRIIR (232 aa)) form the Peptidase S1 domain. H280 serves as the catalytic Charge relay system. An N-linked (GlcNAc...) asparagine glycan is attached at N283. D325 (charge relay system) is an active-site residue. S422 serves as the catalytic Charge relay system.

It belongs to the peptidase S1 family. Heterodimer of a light chain and a heavy chain; disulfide-linked. In terms of processing, gamma-carboxyglutamate residues are formed by vitamin K dependent carboxylation. These residues are essential for the binding of calcium. The activation peptide is cleaved by factor IXa (in the intrinsic pathway), or by factor VIIa (in the extrinsic pathway). Post-translationally, the iron and 2-oxoglutarate dependent 3-hydroxylation of aspartate and asparagine is (R) stereospecific within EGF domains. In terms of tissue distribution, plasma; synthesized in the liver.

It localises to the secreted. It catalyses the reaction Selective cleavage of Arg-|-Thr and then Arg-|-Ile bonds in prothrombin to form thrombin.. Its function is as follows. Factor Xa is a vitamin K-dependent glycoprotein that converts prothrombin to thrombin in the presence of factor Va, calcium and phospholipid during blood clotting. This Pseudonaja textilis (Eastern brown snake) protein is Coagulation factor X isoform 1 (F10).